We begin with the raw amino-acid sequence, 328 residues long: DNA repair protein RAD51 homolog 4 (328 aa).

A preferentially binds ssDNA region spans residues Met-1–Ser-83. Position 107–114 (Gly-107–Thr-114) interacts with ATP.

Belongs to the RecA family. RAD51 subfamily. Part of the BCDX2 complex consisting of RAD51B, RAD51C, RAD51D and XRCC2; the complex has a ring-like structure arranged into a flat disc around a central channel. In the absence of DNA, the BCDX2 subcomplex XRCC2:RAD51D formed a multimeric ring structure; in the presence of single-stranded DNA it formed a filamentous structure with the ssDNA. Interacts with SWSAP1 and ZSWIM7; involved in homologous recombination repair. Interacts with BLM; required for stimulation of BLM activity by the BCDX2 subcomplex XRCC2:RAD51D. In terms of tissue distribution, expressed in colon, prostate, spleen, testis, ovary, thymus and small intestine. Weakly expressed in leukocytes.

Its subcellular location is the nucleus. The protein localises to the cytoplasm. The protein resides in the cytoskeleton. It localises to the microtubule organizing center. It is found in the centrosome. Its subcellular location is the chromosome. The protein localises to the telomere. Its function is as follows. Involved in the homologous recombination repair (HRR) pathway of double-stranded DNA breaks arising during DNA replication or induced by DNA-damaging agents. Bind to single-stranded DNA (ssDNA) and has DNA-dependent ATPase activity. Part of the RAD51 paralog protein complex BCDX2 which acts in the BRCA1-BRCA2-dependent HR pathway. Upon DNA damage, BCDX2 acts downstream of BRCA2 recruitment and upstream of RAD51 recruitment. BCDX2 binds predominantly to the intersection of the four duplex arms of the Holliday junction and to junction of replication forks. The BCDX2 complex was originally reported to bind single-stranded DNA, single-stranded gaps in duplex DNA and specifically to nicks in duplex DNA. Involved in telomere maintenance. The BCDX2 subcomplex XRCC2:RAD51D can stimulate Holliday junction resolution by BLM. The protein is DNA repair protein RAD51 homolog 4 (RAD51D) of Homo sapiens (Human).